The chain runs to 130 residues: Gloverin (130 aa).

As to expression, hemolymph.

It is found in the secreted. Antibacterial protein active against Gram-negative bacteria. The chain is Gloverin from Hyalophora cecropia (Cecropia moth).